Here is a 142-residue protein sequence, read N- to C-terminus: ATP synthase subunit b' (142 aa).

The chain crosses the membrane as a helical span at residues 7-27 (TLPLMMFQFFLLVAVLNAVFF).

The protein belongs to the ATPase B chain family. As to quaternary structure, F-type ATPases have 2 components, F(1) - the catalytic core - and F(0) - the membrane proton channel. F(1) has five subunits: alpha(3), beta(3), gamma(1), delta(1), epsilon(1). F(0) has four main subunits: a(1), b(1), b'(1) and c(10-14). The alpha and beta chains form an alternating ring which encloses part of the gamma chain. F(1) is attached to F(0) by a central stalk formed by the gamma and epsilon chains, while a peripheral stalk is formed by the delta, b and b' chains.

It localises to the cellular thylakoid membrane. F(1)F(0) ATP synthase produces ATP from ADP in the presence of a proton or sodium gradient. F-type ATPases consist of two structural domains, F(1) containing the extramembraneous catalytic core and F(0) containing the membrane proton channel, linked together by a central stalk and a peripheral stalk. During catalysis, ATP synthesis in the catalytic domain of F(1) is coupled via a rotary mechanism of the central stalk subunits to proton translocation. Functionally, component of the F(0) channel, it forms part of the peripheral stalk, linking F(1) to F(0). The b'-subunit is a diverged and duplicated form of b found in plants and photosynthetic bacteria. The chain is ATP synthase subunit b' from Acaryochloris marina (strain MBIC 11017).